Consider the following 281-residue polypeptide: 4-diphosphocytidyl-2-C-methyl-D-erythritol kinase (281 aa).

Residue lysine 15 is part of the active site. ATP is bound at residue 98–108 (PTGAGLGGGSS). Aspartate 140 is an active-site residue.

This sequence belongs to the GHMP kinase family. IspE subfamily.

It carries out the reaction 4-CDP-2-C-methyl-D-erythritol + ATP = 4-CDP-2-C-methyl-D-erythritol 2-phosphate + ADP + H(+). It functions in the pathway isoprenoid biosynthesis; isopentenyl diphosphate biosynthesis via DXP pathway; isopentenyl diphosphate from 1-deoxy-D-xylulose 5-phosphate: step 3/6. In terms of biological role, catalyzes the phosphorylation of the position 2 hydroxy group of 4-diphosphocytidyl-2C-methyl-D-erythritol. The sequence is that of 4-diphosphocytidyl-2-C-methyl-D-erythritol kinase from Neisseria gonorrhoeae (strain NCCP11945).